We begin with the raw amino-acid sequence, 538 residues long: Reticuline oxidase (538 aa).

A signal peptide spans 1–23; that stretch reads MENKTPIFFSLSIFLSLLNCALG. Cysteine 30 and cysteine 89 are disulfide-bonded. Asparagine 38 carries an N-linked (GlcNAc...) asparagine glycan. The 175-residue stretch at 67–241 folds into the FAD-binding PCMH-type domain; sequence LISKPSAIIL…YAWKIKLLPV (175 aa). The segment at residues 104–166 is a cross-link (6-(S-cysteinyl)-8alpha-(pros-histidyl)-FAD (His-Cys)); sequence HSYEGLSYTS…SKLGFTAGWC (63 aa). Residues asparagine 423 and asparagine 471 are each glycosylated (N-linked (GlcNAc...) asparagine).

The protein belongs to the oxygen-dependent FAD-linked oxidoreductase family. It depends on FAD as a cofactor. A metal cation serves as cofactor. Post-translationally, the FAD cofactor is bound via a bicovalent 6-S-cysteinyl, 8alpha-N1-histidyl FAD linkage.

The protein localises to the cytoplasmic vesicle. The catalysed reaction is (S)-reticuline + O2 = (S)-scoulerine + H2O2 + H(+). It functions in the pathway alkaloid biosynthesis; (S)-scoulerine biosynthesis; (S)-scoulerine from (S)-reticuline: step 1/1. Its function is as follows. Essential to the formation of benzophenanthridine alkaloids in the response of plants to pathogenic attack. Catalyzes the stereospecific conversion of the N-methyl moiety of (S)-reticuline into the berberine bridge carbon of (S)-scoulerine. This chain is Reticuline oxidase (BBE1), found in Eschscholzia californica (California poppy).